A 561-amino-acid chain; its full sequence is Arginine--tRNA ligase (561 aa).

Residues 128-138 (ANPTGPLHVGH) carry the 'HIGH' region motif.

Belongs to the class-I aminoacyl-tRNA synthetase family. As to quaternary structure, monomer.

The protein localises to the cytoplasm. The catalysed reaction is tRNA(Arg) + L-arginine + ATP = L-arginyl-tRNA(Arg) + AMP + diphosphate. This Marinobacter nauticus (strain ATCC 700491 / DSM 11845 / VT8) (Marinobacter aquaeolei) protein is Arginine--tRNA ligase.